We begin with the raw amino-acid sequence, 271 residues long: Putative mitochondrial carrier protein PET8 (271 aa).

Solcar repeat units lie at residues 3–76, 91–177, and 187–270; these read STFL…MKQQ, AEVL…LKKK, and VSAW…VHSL. 6 helical membrane passes run 6–26, 51–71, 97–117, 152–168, 193–213, and 251–271; these read LASL…FFPI, GLGS…VTYD, MLSS…AEVI, GWWT…CIQF, AVCG…LDVL, and MWIS…HSLF.

Belongs to the mitochondrial carrier (TC 2.A.29) family.

Its subcellular location is the mitochondrion inner membrane. This Eremothecium gossypii (strain ATCC 10895 / CBS 109.51 / FGSC 9923 / NRRL Y-1056) (Yeast) protein is Putative mitochondrial carrier protein PET8 (PET8).